The sequence spans 289 residues: Phosphatidylglycerol--prolipoprotein diacylglyceryl transferase (289 aa).

Transmembrane regions (helical) follow at residues 21–41 (IGPL…LLGI), 53–73 (IDPN…IPAA), 95–115 (IWHG…ALIL), and 122–142 (IPIW…QAIG). Arginine 143 is a binding site for a 1,2-diacyl-sn-glycero-3-phospho-(1'-sn-glycerol). Helical transmembrane passes span 182–202 (PTFL…IWLF), 215–235 (GVMT…IEGL), and 247–267 (IAQM…VWIY).

It belongs to the Lgt family.

The protein resides in the cell inner membrane. It catalyses the reaction L-cysteinyl-[prolipoprotein] + a 1,2-diacyl-sn-glycero-3-phospho-(1'-sn-glycerol) = an S-1,2-diacyl-sn-glyceryl-L-cysteinyl-[prolipoprotein] + sn-glycerol 1-phosphate + H(+). It participates in protein modification; lipoprotein biosynthesis (diacylglyceryl transfer). In terms of biological role, catalyzes the transfer of the diacylglyceryl group from phosphatidylglycerol to the sulfhydryl group of the N-terminal cysteine of a prolipoprotein, the first step in the formation of mature lipoproteins. The sequence is that of Phosphatidylglycerol--prolipoprotein diacylglyceryl transferase from Synechococcus elongatus (strain ATCC 33912 / PCC 7942 / FACHB-805) (Anacystis nidulans R2).